Here is a 157-residue protein sequence, read N- to C-terminus: Tripartite terminase subunit 2 (157 aa).

The disordered stretch occupies residues 1-69; it reads MSWAKQRVPF…DGEDGHALPD (69 aa). Over residues 11–27 the composition is skewed to acidic residues; the sequence is LDDDDGEEENDVQDDVD.

The protein belongs to the herpesviridae TRM2 protein family. Associates with TRM1 and TRM3 to form the tripartite terminase complex.

It is found in the host nucleus. Functionally, component of the molecular motor that translocates viral genomic DNA in empty capsid during DNA packaging. Forms a tripartite terminase complex together with TRM1 and TRM3 in the host cytoplasm. Once the complex reaches the host nucleus, it interacts with the capsid portal vertex. This portal forms a ring in which genomic DNA is translocated into the capsid. In Homo sapiens (Human), this protein is Tripartite terminase subunit 2.